Here is a 242-residue protein sequence, read N- to C-terminus: Uridylate kinase (242 aa).

Position 16–19 (Lys16–Gly19) interacts with ATP. Gly58 is a binding site for UMP. ATP-binding residues include Gly59 and Arg63. Residues Asp78 and Thr139–Thr146 contribute to the UMP site. Positions 166, 167, 172, and 175 each coordinate ATP.

This sequence belongs to the UMP kinase family. As to quaternary structure, homohexamer.

It localises to the cytoplasm. The enzyme catalyses UMP + ATP = UDP + ADP. The protein operates within pyrimidine metabolism; CTP biosynthesis via de novo pathway; UDP from UMP (UMPK route): step 1/1. With respect to regulation, inhibited by UTP. Its function is as follows. Catalyzes the reversible phosphorylation of UMP to UDP. This is Uridylate kinase from Rickettsia prowazekii (strain Madrid E).